We begin with the raw amino-acid sequence, 144 residues long: Large ribosomal subunit protein uL13 (144 aa).

Belongs to the universal ribosomal protein uL13 family. Part of the 50S ribosomal subunit.

Its function is as follows. This protein is one of the early assembly proteins of the 50S ribosomal subunit, although it is not seen to bind rRNA by itself. It is important during the early stages of 50S assembly. The sequence is that of Large ribosomal subunit protein uL13 from Lawsonia intracellularis (strain PHE/MN1-00).